The primary structure comprises 985 residues: DNA repair protein REV1 (985 aa).

The BRCT domain maps to 161–249 (QSSKIFKNCV…RLLPWQNYSL (89 aa)). Residues 319–329 (YFAHSRLHHLS) form an interaction with target DNA region. DCTP is bound by residues Arg324 and 362–366 (DFDCF). In terms of domain architecture, UmuC spans 358 to 554 (IFHIDFDCFF…FKLDDLPGVG (197 aa)). The Mg(2+) site is built by Asp362 and Phe363. Residues 395-397 (TKN) form an interaction with target DNA region. Residues 402 to 408 (SCNYVAR), Asn414, and Asp467 each bind dCTP. Residues Asp467 and Glu468 each contribute to the Mg(2+) site. Interaction with target DNA stretches follow at residues 554–557 (GHST) and 620–628 (RKSLSIDIN).

The protein belongs to the DNA polymerase type-Y family. In terms of assembly, interacts with REV7. It depends on Mg(2+) as a cofactor.

The protein resides in the nucleus. The protein localises to the mitochondrion. In terms of biological role, deoxycytidyl transferase involved in DNA repair. Transfers a dCMP residue from dCTP to the 3'-end of a DNA primer in a template-dependent reaction. May assist in the first step in the bypass of abasic lesions by the insertion of a nucleotide opposite the lesion. Required for normal induction of mutations by physical and chemical agents. Involved in mitochondrial DNA mutagenesis. This is DNA repair protein REV1 (REV1) from Saccharomyces cerevisiae (strain ATCC 204508 / S288c) (Baker's yeast).